A 461-amino-acid polypeptide reads, in one-letter code: Eukaryotic translation initiation factor 3 subunit M (461 aa).

Positions 42 to 61 (LLEPLRQQEQSDAEPDRKQR) are disordered. Residues 205–376 (DQELAQTHVV…SEFLVHRATY (172 aa)) enclose the PCI domain. A disordered region spans residues 422–461 (AAEEAAQGKSGDKKGDRRQRRDQPQQSQPAPEAATAVAAE). Positions 431-444 (SGDKKGDRRQRRDQ) are enriched in basic and acidic residues. The segment covering 445–461 (PQQSQPAPEAATAVAAE) has biased composition (low complexity).

This sequence belongs to the eIF-3 subunit M family. As to quaternary structure, component of the eukaryotic translation initiation factor 3 (eIF-3) complex.

It localises to the cytoplasm. Functionally, component of the eukaryotic translation initiation factor 3 (eIF-3) complex, which is involved in protein synthesis of a specialized repertoire of mRNAs and, together with other initiation factors, stimulates binding of mRNA and methionyl-tRNAi to the 40S ribosome. The eIF-3 complex specifically targets and initiates translation of a subset of mRNAs involved in cell proliferation. The sequence is that of Eukaryotic translation initiation factor 3 subunit M from Aspergillus terreus (strain NIH 2624 / FGSC A1156).